Here is a 336-residue protein sequence, read N- to C-terminus: Adenosine deaminase (336 aa).

Positions 15 and 17 each coordinate Zn(2+). Substrate-binding residues include histidine 17, aspartate 19, and glycine 172. Histidine 199 is a binding site for Zn(2+). Glutamate 202 functions as the Proton donor in the catalytic mechanism. A Zn(2+)-binding site is contributed by aspartate 279.

Belongs to the metallo-dependent hydrolases superfamily. Adenosine and AMP deaminases family. Adenosine deaminase subfamily. Zn(2+) serves as cofactor.

It catalyses the reaction adenosine + H2O + H(+) = inosine + NH4(+). The enzyme catalyses 2'-deoxyadenosine + H2O + H(+) = 2'-deoxyinosine + NH4(+). Functionally, catalyzes the hydrolytic deamination of adenosine and 2-deoxyadenosine. This chain is Adenosine deaminase, found in Streptococcus thermophilus (strain ATCC BAA-250 / LMG 18311).